The following is a 574-amino-acid chain: uncharacterized protein (574 aa).

The tract at residues 297–317 (SAASKPRKRKKDEVSGAQVNS) is disordered.

This is an uncharacterized protein from Mus musculus (Mouse).